A 275-amino-acid polypeptide reads, in one-letter code: RCYQRKDIHITDFYFLNTSGTGGGIENLSVGNQKLSLAIIQDGEDQNGAGYIADARLANIGLWEDASLEVALGINFSTESKNGKYDGDDGLLASGIIHQNMSNGFNQTVVQVGTAGYGIQMANFWGAGAYYDRSGDQNDASGYRVINWGVMNLGENWEMGHQLAYLAGSDLGTTKYDSSQYSIVARPMYKWNDTMRTIFEAGYNAGEVDDVDFGGAKFTVAQAWAMGDSFWARPEIRVYGSYLMDLENDSFGEVKNDTGVVTAAGTDNDFVVGIH.

The protein belongs to the porin LamB (TC 1.B.3) family. In terms of assembly, homotrimer formed of three 18-stranded antiparallel beta-barrels, containing three independent channels.

It is found in the cell outer membrane. It carries out the reaction beta-maltose(in) = beta-maltose(out). In terms of biological role, involved in the transport of maltose and maltodextrins. In Vibrio parahaemolyticus, this protein is Maltoporin (lamB).